The chain runs to 203 residues: MDHKIDLLQPALEAALAGKIQALVRDRGELTLTVTAADYLAVCTTLRDHAELKLEQLIDLCGLDYSSYKDGAGSPYTEGPRYCVVLHLLSVSKNWRLRLKVFCADDGLPVVPSVNEIWAAANWFEREAFDLYGIVFEGHADLRRILTDYGFIGHPFRKDFPTTGHVEMRYDAEQRRVIYQPVTIEPREITPRIIREDNYGGLH.

Belongs to the complex I 30 kDa subunit family. In terms of assembly, NDH-1 is composed of 14 different subunits. Subunits NuoB, C, D, E, F, and G constitute the peripheral sector of the complex.

It is found in the cell inner membrane. The catalysed reaction is a quinone + NADH + 5 H(+)(in) = a quinol + NAD(+) + 4 H(+)(out). NDH-1 shuttles electrons from NADH, via FMN and iron-sulfur (Fe-S) centers, to quinones in the respiratory chain. The immediate electron acceptor for the enzyme in this species is believed to be ubiquinone. Couples the redox reaction to proton translocation (for every two electrons transferred, four hydrogen ions are translocated across the cytoplasmic membrane), and thus conserves the redox energy in a proton gradient. The sequence is that of NADH-quinone oxidoreductase subunit C from Methylibium petroleiphilum (strain ATCC BAA-1232 / LMG 22953 / PM1).